A 557-amino-acid polypeptide reads, in one-letter code: Urocanate hydratase (557 aa).

The disordered stretch occupies residues methionine 1–asparagine 20. NAD(+) contacts are provided by residues glycine 52 to glycine 53, glutamine 130, glycine 176 to glycine 178, glutamate 196, arginine 201, asparagine 242 to alanine 243, glutamine 263 to histidine 267, tyrosine 273 to leucine 274, and tyrosine 322. Cysteine 410 is a catalytic residue. Position 492 (glycine 492) interacts with NAD(+).

Belongs to the urocanase family. It depends on NAD(+) as a cofactor.

The protein localises to the cytoplasm. It catalyses the reaction 4-imidazolone-5-propanoate = trans-urocanate + H2O. It functions in the pathway amino-acid degradation; L-histidine degradation into L-glutamate; N-formimidoyl-L-glutamate from L-histidine: step 2/3. Catalyzes the conversion of urocanate to 4-imidazolone-5-propionate. This is Urocanate hydratase from Brucella suis (strain ATCC 23445 / NCTC 10510).